Here is a 399-residue protein sequence, read N- to C-terminus: S-adenosylmethionine synthase (399 aa).

ATP is bound at residue histidine 19. Aspartate 21 contacts Mg(2+). Glutamate 47 lines the K(+) pocket. The L-methionine site is built by glutamate 60 and glutamine 103. The interval 103–113 is flexible loop; it reads QSPDIAQGVNQ. ATP-binding positions include 179–181, 246–247, aspartate 255, 261–262, alanine 278, and lysine 282; these read DGK, RF, and RK. Aspartate 255 provides a ligand contact to L-methionine. An L-methionine-binding site is contributed by lysine 286.

This sequence belongs to the AdoMet synthase family. In terms of assembly, homotetramer; dimer of dimers. It depends on Mg(2+) as a cofactor. The cofactor is K(+).

It is found in the cytoplasm. It carries out the reaction L-methionine + ATP + H2O = S-adenosyl-L-methionine + phosphate + diphosphate. It functions in the pathway amino-acid biosynthesis; S-adenosyl-L-methionine biosynthesis; S-adenosyl-L-methionine from L-methionine: step 1/1. In terms of biological role, catalyzes the formation of S-adenosylmethionine (AdoMet) from methionine and ATP. The overall synthetic reaction is composed of two sequential steps, AdoMet formation and the subsequent tripolyphosphate hydrolysis which occurs prior to release of AdoMet from the enzyme. The sequence is that of S-adenosylmethionine synthase from Halalkalibacterium halodurans (strain ATCC BAA-125 / DSM 18197 / FERM 7344 / JCM 9153 / C-125) (Bacillus halodurans).